The sequence spans 128 residues: Probable 4-amino-4-deoxy-L-arabinose-phosphoundecaprenol flippase subunit ArnF (128 aa).

Topologically, residues 1–2 are cytoplasmic; sequence MG. A helical membrane pass occupies residues 3-23; the sequence is LIWGLFSVIIASVAQLSLGFA. Over 24–35 the chain is Periplasmic; it reads ASHLPPMTHLWD. A helical transmembrane segment spans residues 36–56; sequence FIAALLAFGLDARILLLGLLG. At 57–76 the chain is on the cytoplasmic side; it reads YLLSVFCWYKTLHKLALSKA. The helical transmembrane segment at 77–97 threads the bilayer; sequence YALLSMSYVLVWIASMVLPGW. The Periplasmic segment spans residues 98–100; the sequence is EGT. A helical transmembrane segment spans residues 101–121; that stretch reads FSLKALLGVACIMSGLMLIFL. At 122–128 the chain is on the cytoplasmic side; sequence PTTKQRY.

It belongs to the ArnF family. Heterodimer of ArnE and ArnF.

Its subcellular location is the cell inner membrane. The protein operates within bacterial outer membrane biogenesis; lipopolysaccharide biosynthesis. Translocates 4-amino-4-deoxy-L-arabinose-phosphoundecaprenol (alpha-L-Ara4N-phosphoundecaprenol) from the cytoplasmic to the periplasmic side of the inner membrane. This is Probable 4-amino-4-deoxy-L-arabinose-phosphoundecaprenol flippase subunit ArnF from Shigella boydii serotype 4 (strain Sb227).